The primary structure comprises 363 residues: Ribonuclease D (363 aa).

One can recognise a 3'-5' exonuclease domain in the interval 5–168; sequence ITHPSELTDR…AIHDELTRRL (164 aa). Residues 208–288 form the HRDC domain; that stretch reads EPAAQRRLLR…NTPLPDEEHA (81 aa).

The protein belongs to the RNase D family. A divalent metal cation is required as a cofactor.

The protein localises to the cytoplasm. It carries out the reaction Exonucleolytic cleavage that removes extra residues from the 3'-terminus of tRNA to produce 5'-mononucleotides.. Its function is as follows. Exonuclease involved in the 3' processing of various precursor tRNAs. Initiates hydrolysis at the 3'-terminus of an RNA molecule and releases 5'-mononucleotides. The chain is Ribonuclease D from Xanthomonas oryzae pv. oryzae (strain KACC10331 / KXO85).